A 307-amino-acid chain; its full sequence is Glycerol-3-phosphate dehydrogenase [NAD(P)+] (307 aa).

The NADPH site is built by Trp14, Arg34, Arg35, and Lys82. The sn-glycerol 3-phosphate site is built by Lys82 and Gly110. Position 114 (Ser114) interacts with NADPH. 5 residues coordinate sn-glycerol 3-phosphate: Lys165, Asp218, Ser228, Arg229, and Asn230. The Proton acceptor role is filled by Lys165. Residue Arg229 participates in NADPH binding. Position 255 (Glu255) interacts with NADPH.

Belongs to the NAD-dependent glycerol-3-phosphate dehydrogenase family.

The protein resides in the cytoplasm. It carries out the reaction sn-glycerol 3-phosphate + NAD(+) = dihydroxyacetone phosphate + NADH + H(+). The catalysed reaction is sn-glycerol 3-phosphate + NADP(+) = dihydroxyacetone phosphate + NADPH + H(+). Its pathway is membrane lipid metabolism; glycerophospholipid metabolism. Its function is as follows. Catalyzes the reduction of the glycolytic intermediate dihydroxyacetone phosphate (DHAP) to sn-glycerol 3-phosphate (G3P), the key precursor for phospholipid synthesis. The sequence is that of Glycerol-3-phosphate dehydrogenase [NAD(P)+] from Trichormus variabilis (strain ATCC 29413 / PCC 7937) (Anabaena variabilis).